The following is a 201-amino-acid chain: Small ribosomal subunit protein uS4c (201 aa).

The interval 20–43 (GLTNKRPKSRNDPTNQSSSRKISQ) is disordered. The span at 31–41 (DPTNQSSSRKI) shows a compositional bias: polar residues. The S4 RNA-binding domain occupies 89-157 (MRLDNIIFRL…IGKNLDLSQK (69 aa)).

The protein belongs to the universal ribosomal protein uS4 family. In terms of assembly, part of the 30S ribosomal subunit. Contacts protein S5. The interaction surface between S4 and S5 is involved in control of translational fidelity.

The protein localises to the plastid. It localises to the chloroplast. One of the primary rRNA binding proteins, it binds directly to 16S rRNA where it nucleates assembly of the body of the 30S subunit. In terms of biological role, with S5 and S12 plays an important role in translational accuracy. The chain is Small ribosomal subunit protein uS4c (rps4) from Cycas taitungensis (Prince sago).